The following is a 476-amino-acid chain: Bifunctional protein HldE (476 aa).

The tract at residues 1 to 318 (MKPILPDYNN…AEAIHGSRDT (318 aa)) is ribokinase. Residue 195–198 (NMSE) participates in ATP binding. Asp264 is a catalytic residue. The cytidylyltransferase stretch occupies residues 344-476 (MTNGCFDILH…IIDAIKGGRG (133 aa)).

In the N-terminal section; belongs to the carbohydrate kinase PfkB family. This sequence in the C-terminal section; belongs to the cytidylyltransferase family. In terms of assembly, homodimer.

The catalysed reaction is D-glycero-beta-D-manno-heptose 7-phosphate + ATP = D-glycero-beta-D-manno-heptose 1,7-bisphosphate + ADP + H(+). The enzyme catalyses D-glycero-beta-D-manno-heptose 1-phosphate + ATP + H(+) = ADP-D-glycero-beta-D-manno-heptose + diphosphate. Its pathway is nucleotide-sugar biosynthesis; ADP-L-glycero-beta-D-manno-heptose biosynthesis; ADP-L-glycero-beta-D-manno-heptose from D-glycero-beta-D-manno-heptose 7-phosphate: step 1/4. The protein operates within nucleotide-sugar biosynthesis; ADP-L-glycero-beta-D-manno-heptose biosynthesis; ADP-L-glycero-beta-D-manno-heptose from D-glycero-beta-D-manno-heptose 7-phosphate: step 3/4. It functions in the pathway bacterial outer membrane biogenesis; LPS core biosynthesis. Its function is as follows. Catalyzes the phosphorylation of D-glycero-D-manno-heptose 7-phosphate at the C-1 position to selectively form D-glycero-beta-D-manno-heptose-1,7-bisphosphate. Functionally, catalyzes the ADP transfer from ATP to D-glycero-beta-D-manno-heptose 1-phosphate, yielding ADP-D-glycero-beta-D-manno-heptose. The polypeptide is Bifunctional protein HldE (Vibrio vulnificus (strain YJ016)).